A 434-amino-acid polypeptide reads, in one-letter code: Probable carboxypeptidase BDCG_03757 (434 aa).

The first 20 residues, M1 to A20, serve as a signal peptide directing secretion. N-linked (GlcNAc...) asparagine glycosylation is found at N136 and N150. D160 contributes to the Zn(2+) binding site. E192 acts as the Proton acceptor in catalysis. E193 serves as a coordination point for Zn(2+). N343 carries an N-linked (GlcNAc...) asparagine glycan.

Belongs to the peptidase M20A family. Zn(2+) is required as a cofactor.

It is found in the secreted. In Ajellomyces dermatitidis (strain ER-3 / ATCC MYA-2586) (Blastomyces dermatitidis), this protein is Probable carboxypeptidase BDCG_03757.